We begin with the raw amino-acid sequence, 813 residues long: Receptor-like protein 48 (813 aa).

The first 30 residues, 1–30, serve as a signal peptide directing secretion; that stretch reads MHSCSERRMMTVIWSLCLIFCLSNSILAIA. Residues 31–786 lie on the Extracellular side of the membrane; the sequence is KDLCLPDQRD…EDEEKEEKNQ (756 aa). Asparagine 69, asparagine 105, and asparagine 123 each carry an N-linked (GlcNAc...) asparagine glycan. LRR repeat units lie at residues 111-134, 136-159, and 160-182; these read LQHL…SIGN, KYLR…LGSL, and SYLT…SGGN. 2 N-linked (GlcNAc...) asparagine glycosylation sites follow: asparagine 195 and asparagine 216. 21 LRR repeats span residues 196–219, 220–244, 245–260, 261–285, 288–310, 311–335, 336–359, 361–381, 382–405, 406–432, 434–450, 451–473, 475–498, 500–521, 523–544, 545–571, 572–595, 642–666, 667–690, 691–714, and 716–739; these read LSSV…NMSS, LSKL…LFMI, PSLN…NISS, HSEL…LSKL, LRDL…IFLH, LKSL…FFSH, LMSL…SFPS, TGTL…LENQ, TSLF…LWRL, PTLS…IYSF, ASDN…VCEL, VSLN…CFEN, KTIS…IISE, LTSL…LIKC, DLEF…WLRS, LSNL…SLSF, PKLR…YFAG, FTIY…IGIL, KELI…LSNL, SNLQ…LGKL, and FLEW…QIQS. N-linked (GlcNAc...) asparagine glycosylation is found at asparagine 248 and asparagine 257. The N-linked (GlcNAc...) asparagine glycan is linked to asparagine 380. Asparagine 484 is a glycosylation site (N-linked (GlcNAc...) asparagine). 2 N-linked (GlcNAc...) asparagine glycosylation sites follow: asparagine 673 and asparagine 689. Asparagine 721 and asparagine 741 each carry an N-linked (GlcNAc...) asparagine glycan. Positions 756-785 are disordered; sequence FLNKCGGEEEEEEEATKQEEDEDEEKEEKN. Over residues 763–781 the composition is skewed to acidic residues; that stretch reads EEEEEEEATKQEEDEDEEK. Residues 787 to 807 form a helical membrane-spanning segment; that stretch reads VFSWIAAAIGYVPGVFCGLTI. The Cytoplasmic segment spans residues 808–813; it reads AHILTS.

The protein belongs to the RLP family.

The protein localises to the cell membrane. Functionally, plays a role in root hair development. This Arabidopsis thaliana (Mouse-ear cress) protein is Receptor-like protein 48.